Here is a 514-residue protein sequence, read N- to C-terminus: Probable lipid II flippase MurJ (514 aa).

The next 14 helical transmembrane spans lie at 3-23 (ILKS…FGFF), 25-45 (DVLI…FIAF), 92-112 (ILVL…IIFI), 130-150 (LLKI…CSSI), 157-177 (FFIP…FSFF), 186-206 (IISL…YQFP), 245-265 (ISLI…ISWI), 271-291 (LIEF…FTSF), 315-335 (LILS…LVII), 354-374 (LELY…VSAF), 386-406 (ISIL…FYFQ), 409-429 (GLAL…YWKL), 448-468 (LLIA…FIPS), and 481-501 (LFTI…FLGI).

It belongs to the MurJ/MviN family.

It localises to the cell inner membrane. It participates in cell wall biogenesis; peptidoglycan biosynthesis. In terms of biological role, involved in peptidoglycan biosynthesis. Transports lipid-linked peptidoglycan precursors from the inner to the outer leaflet of the cytoplasmic membrane. This Buchnera aphidicola subsp. Schizaphis graminum (strain Sg) protein is Probable lipid II flippase MurJ.